A 149-amino-acid chain; its full sequence is Large ribosomal subunit protein eL19 (149 aa).

The tract at residues 45–130 is disordered; that stretch reads VDEGAIQAKD…RDLYDKAGGG (86 aa). The span at 58-85 shows a compositional bias: basic residues; it reads NSRGRARERQKKRAYGHQKGAGSRKGKA. Basic and acidic residues predominate over residues 90 to 113; sequence NSKEDWESRIRAQRTKLRELRDEG.

It belongs to the eukaryotic ribosomal protein eL19 family. As to quaternary structure, part of the 50S ribosomal subunit.

Functionally, binds to the 23S rRNA. Located at the polypeptide exit tunnel on the outside of the subunit. This Haloarcula marismortui (strain ATCC 43049 / DSM 3752 / JCM 8966 / VKM B-1809) (Halobacterium marismortui) protein is Large ribosomal subunit protein eL19.